The primary structure comprises 153 residues: Large ribosomal subunit protein bL9 (153 aa).

It belongs to the bacterial ribosomal protein bL9 family.

Binds to the 23S rRNA. The sequence is that of Large ribosomal subunit protein bL9 from Synechococcus sp. (strain JA-3-3Ab) (Cyanobacteria bacterium Yellowstone A-Prime).